The sequence spans 50 residues: Sperm protamine P1 (50 aa).

2 disulfide bridges follow: Cys-7–Cys-15 and Cys-39–Cys-47.

It belongs to the protamine P1 family. In terms of assembly, cross-linked by interchain disulfide bonds around the DNA-helix. Testis.

Its subcellular location is the nucleus. The protein resides in the chromosome. Its function is as follows. Protamines substitute for histones in the chromatin of sperm during the haploid phase of spermatogenesis. They compact sperm DNA into a highly condensed, stable and inactive complex. This is Sperm protamine P1 (PRM1) from Sus scrofa (Pig).